Here is a 195-residue protein sequence, read N- to C-terminus: ATP-dependent Clp protease proteolytic subunit (195 aa).

The active-site Nucleophile is serine 98. Histidine 123 is a catalytic residue.

Belongs to the peptidase S14 family. In terms of assembly, fourteen ClpP subunits assemble into 2 heptameric rings which stack back to back to give a disk-like structure with a central cavity, resembling the structure of eukaryotic proteasomes.

It is found in the cytoplasm. The enzyme catalyses Hydrolysis of proteins to small peptides in the presence of ATP and magnesium. alpha-casein is the usual test substrate. In the absence of ATP, only oligopeptides shorter than five residues are hydrolyzed (such as succinyl-Leu-Tyr-|-NHMec, and Leu-Tyr-Leu-|-Tyr-Trp, in which cleavage of the -Tyr-|-Leu- and -Tyr-|-Trp bonds also occurs).. Cleaves peptides in various proteins in a process that requires ATP hydrolysis. Has a chymotrypsin-like activity. Plays a major role in the degradation of misfolded proteins. The polypeptide is ATP-dependent Clp protease proteolytic subunit (Thermodesulfovibrio yellowstonii (strain ATCC 51303 / DSM 11347 / YP87)).